A 245-amino-acid polypeptide reads, in one-letter code: 4-hydroxy-tetrahydrodipicolinate reductase (245 aa).

Residues 7-12 (GARGKV), 75-77 (GTT), and 102-105 (APNF) each bind NAD(+). His132 (proton donor/acceptor) is an active-site residue. His133 contacts (S)-2,3,4,5-tetrahydrodipicolinate. Lys136 acts as the Proton donor in catalysis. 142–143 (GT) is a (S)-2,3,4,5-tetrahydrodipicolinate binding site.

This sequence belongs to the DapB family.

It localises to the cytoplasm. The catalysed reaction is (S)-2,3,4,5-tetrahydrodipicolinate + NAD(+) + H2O = (2S,4S)-4-hydroxy-2,3,4,5-tetrahydrodipicolinate + NADH + H(+). It carries out the reaction (S)-2,3,4,5-tetrahydrodipicolinate + NADP(+) + H2O = (2S,4S)-4-hydroxy-2,3,4,5-tetrahydrodipicolinate + NADPH + H(+). The protein operates within amino-acid biosynthesis; L-lysine biosynthesis via DAP pathway; (S)-tetrahydrodipicolinate from L-aspartate: step 4/4. In terms of biological role, catalyzes the conversion of 4-hydroxy-tetrahydrodipicolinate (HTPA) to tetrahydrodipicolinate. The protein is 4-hydroxy-tetrahydrodipicolinate reductase of Mycolicibacterium smegmatis (strain ATCC 700084 / mc(2)155) (Mycobacterium smegmatis).